The sequence spans 334 residues: Type IV inositol polyphosphate 5-phosphatase 11 (334 aa).

Catalytic regions lie at residues 206–222 (DLTV…QDVS) and 282–297 (KIRV…FKIQ).

This sequence belongs to the inositol polyphosphate 5-phosphatase family. In terms of tissue distribution, expressed ubiquitously.

It localises to the cell membrane. It carries out the reaction a 1,2-diacyl-sn-glycero-3-phospho-(1D-myo-inositol-4,5-bisphosphate) + H2O = a 1,2-diacyl-sn-glycero-3-phospho-(1D-myo-inositol 4-phosphate) + phosphate. It catalyses the reaction a 1,2-diacyl-sn-glycero-3-phospho-(1D-myo-inositol-3,4,5-trisphosphate) + H2O = a 1,2-diacyl-sn-glycero-3-phospho-(1D-myo-inositol-3,4-bisphosphate) + phosphate. Its function is as follows. Has phosphatase activity toward PtdIns(4,5)P2, and in vitro toward PtdIns(3,5)P2 and PtdIns(3,4,5)P3. Cannot dephosphorylate PtdIns(5)P, Ins(1,4,5)P3 and Ins(1,3,4,5)P4. The chain is Type IV inositol polyphosphate 5-phosphatase 11 from Arabidopsis thaliana (Mouse-ear cress).